The primary structure comprises 476 residues: Calcium/calmodulin-dependent protein kinase type 1G (476 aa).

The Protein kinase domain occupies 23–277; it reads FIFMEVLGSG…CEKALRHPWI (255 aa). ATP contacts are provided by residues 29-37 and Lys52; that span reads LGSGAFSEV. Asp143 acts as the Proton acceptor in catalysis. The interval 277-317 is autoinhibitory domain; it reads IDGNTALHRDIYPSVSLQIQKNFAKSKWRQAFNAAAVVHHM. The interval 297–318 is calmodulin-binding; sequence KNFAKSKWRQAFNAAAVVHHMR. Residues 326-387 are disordered; sequence SPSVRQEVEN…SSRPSAPGGR (62 aa).

This sequence belongs to the protein kinase superfamily. CAMK Ser/Thr protein kinase family. CaMK subfamily. In terms of processing, prenylated on Cys-473.

It is found in the cytoplasm. The protein resides in the golgi apparatus membrane. The protein localises to the cell membrane. It catalyses the reaction L-seryl-[protein] + ATP = O-phospho-L-seryl-[protein] + ADP + H(+). The catalysed reaction is L-threonyl-[protein] + ATP = O-phospho-L-threonyl-[protein] + ADP + H(+). Its activity is regulated as follows. Activated by Ca(2+)/calmodulin. Binding of calmodulin is thought to result in a conformational change and leads to activation through phosphorylation by CAMKK1. Functionally, calcium/calmodulin-dependent protein kinase belonging to a proposed calcium-triggered signaling cascade. In vitro phosphorylates transcription factor CREB1. The chain is Calcium/calmodulin-dependent protein kinase type 1G (Camk1g) from Rattus norvegicus (Rat).